A 265-amino-acid polypeptide reads, in one-letter code: Expansin-like A2 (265 aa).

An N-terminal signal peptide occupies residues 1–21 (MLQGFLFLLSVVLLFSSSAAA). Residues 42–148 (SGACAYGSMA…RRVPCDYGNK (107 aa)) enclose the Expansin-like EG45 domain. 2 N-linked (GlcNAc...) asparagine glycosylation sites follow: asparagine 100 and asparagine 103. The 83-residue stretch at 162-244 (NYLAIKLLYQ…NWEAGKSYDA (83 aa)) folds into the Expansin-like CBD domain.

Belongs to the expansin family. Expansin-like A subfamily.

Its subcellular location is the secreted. This chain is Expansin-like A2 (EXLA2), found in Arabidopsis thaliana (Mouse-ear cress).